The chain runs to 207 residues: MSDAALPIQASPEADILSALGARSIVLVGMMGVGKSTIGRRMAARLKLPFVDADTEIEAAAGMTIPEIFERHGEGHFRDGEARVIARLLDGGPVVLATGGGAFMREETRARIAAKAVSIWLKADHDVIMRRVRRRADRPLLQTADPEGTVTRLLTEREPVYSHADLTIASRDVPHDKIVEECIETLRAHLCGEQAAQPPADVASAVR.

ATP is bound at residue 32–37; that stretch reads GVGKST. A Mg(2+)-binding site is contributed by serine 36. Substrate-binding residues include aspartate 54, arginine 78, and glycine 100. Position 138 (arginine 138) interacts with ATP. Residue arginine 157 coordinates substrate.

It belongs to the shikimate kinase family. In terms of assembly, monomer. Requires Mg(2+) as cofactor.

The protein localises to the cytoplasm. It catalyses the reaction shikimate + ATP = 3-phosphoshikimate + ADP + H(+). Its pathway is metabolic intermediate biosynthesis; chorismate biosynthesis; chorismate from D-erythrose 4-phosphate and phosphoenolpyruvate: step 5/7. Catalyzes the specific phosphorylation of the 3-hydroxyl group of shikimic acid using ATP as a cosubstrate. The polypeptide is Shikimate kinase (Bradyrhizobium diazoefficiens (strain JCM 10833 / BCRC 13528 / IAM 13628 / NBRC 14792 / USDA 110)).